A 197-amino-acid polypeptide reads, in one-letter code: Thymidylate kinase (197 aa).

An ATP-binding site is contributed by 7–14; the sequence is GIDGSGKS.

It belongs to the thymidylate kinase family.

The catalysed reaction is dTMP + ATP = dTDP + ADP. Its function is as follows. Phosphorylation of dTMP to form dTDP in both de novo and salvage pathways of dTTP synthesis. The protein is Thymidylate kinase of Thermotoga petrophila (strain ATCC BAA-488 / DSM 13995 / JCM 10881 / RKU-1).